The following is a 186-amino-acid chain: Heat shock protein 23 (186 aa).

The region spanning 53-161 is the sHSP domain; that stretch reads VGASSGSSGA…KGNERIVQIQ (109 aa). The segment at 163–186 is disordered; the sequence is VGPAHLNVKENPKEAVEQDNGNDK. Residues 169 to 186 show a composition bias toward basic and acidic residues; it reads NVKENPKEAVEQDNGNDK.

Belongs to the small heat shock protein (HSP20) family.

This is Heat shock protein 23 (Hsp23) from Drosophila melanogaster (Fruit fly).